A 99-amino-acid chain; its full sequence is Sec-independent protein translocase protein TatA (99 aa).

A helical transmembrane segment spans residues 1 to 21 (MIGNLKPLEIVLIIAVILLLF). The disordered stretch occupies residues 46–99 (AMKKDDAATAAPTTETVADDTVPPQSTTARTIQAAPGDVTSSRPVSEAKPTTQS). The segment covering 53-69 (ATAAPTTETVADDTVPP) has biased composition (low complexity). Positions 84 to 99 (VTSSRPVSEAKPTTQS) are enriched in polar residues.

This sequence belongs to the TatA/E family. In terms of assembly, the Tat system comprises two distinct complexes: a TatABC complex, containing multiple copies of TatA, TatB and TatC subunits, and a separate TatA complex, containing only TatA subunits. Substrates initially bind to the TatABC complex, which probably triggers association of the separate TatA complex to form the active translocon.

The protein localises to the cell membrane. In terms of biological role, part of the twin-arginine translocation (Tat) system that transports large folded proteins containing a characteristic twin-arginine motif in their signal peptide across membranes. TatA could form the protein-conducting channel of the Tat system. This chain is Sec-independent protein translocase protein TatA, found in Streptomyces griseus subsp. griseus (strain JCM 4626 / CBS 651.72 / NBRC 13350 / KCC S-0626 / ISP 5235).